A 274-amino-acid chain; its full sequence is NAD-dependent protein deacetylase (274 aa).

A Deacetylase sirtuin-type domain is found at 1 to 274 (MDSRMSDLQA…CDEVLAEVVP (274 aa)). Residues 26-46 (GAGC…GQWK) and 104-107 (QNVD) each bind NAD(+). Catalysis depends on His122, which acts as the Proton acceptor. Positions 130, 133, 181, and 184 each coordinate Zn(2+). Residues 221-223 (GSS), 247-249 (NLG), and Cys265 each bind NAD(+).

Belongs to the sirtuin family. Class II subfamily. Zn(2+) serves as cofactor.

The protein localises to the cytoplasm. It catalyses the reaction N(6)-acetyl-L-lysyl-[protein] + NAD(+) + H2O = 2''-O-acetyl-ADP-D-ribose + nicotinamide + L-lysyl-[protein]. Its function is as follows. NAD-dependent protein deacetylase which modulates the activities of several enzymes which are inactive in their acetylated form. In Bordetella pertussis (strain Tohama I / ATCC BAA-589 / NCTC 13251), this protein is NAD-dependent protein deacetylase.